We begin with the raw amino-acid sequence, 1755 residues long: MESQQLSNYPHISHGSACASVTSKEVHTNQDPLDVSASKIQEYDKASTKANSQQTTTPASSAVPENPHHASPQPASVPPPQNGPYPQQCMMTQNQANPSGWSFYGHPSMIPYTPYQMSPMYFPPGPQSQFPQYPSSVGTPLSTPSPESGNTFTDSSSADSDMTSTKKYVRPPPMLTSPNDFPNWVKTYIKFLQNSNLGGIIPTVNGKPVRQITDDELTFLYNTFQIFAPSQFLPTWVKDILSVDYTDIMKILSKSIEKMQSDTQEANDIVTLANLQYNGSTPADAFETKVTNIIDRLNNNGIHINNKVACQLIMRGLSGEYKFLRYTRHRHLNMTVAELFLDIHAIYEEQQGSRNSKPNYRRNPSDEKNDSRSYTNTTKPKVIARNPQKTNNSKSKTARAHNVSTSNNSPSTDNDSISKSTTEPIQLNNKHDLHLGQELTESTVNHTNHSDDELPGHLLLDSGASRTLIRSAHHIHSASSNPGINVVDAQKRNIPINAIGDLQFHFQDNTKTSIKVLHTPNIAYDLLSLNELAAVDITACFTKNVLERSDGTVLAPIVKYGDFYWVSKKYLLPSNISVPTINNVHTSESTRKYPYPFIHRMLAHANAQTIRYSLKNNTITYFNESDVDWSSAIDYQCPDCLIGKSTKHRHIKGSRLKYQNSYEPFQYLHTDIFGPVHNLPNSAPSYFISFTDETTKFRWVYPLHDRREDSILDVFTTILAFIKNQFQASVLVIQMDRGSEYTNRTLHKFLEKNGITPCYTTTADSRAHGVAERLNRTLLDDCRTQLQCSGLPNHLWFSAIEFSTIVRNSLASPKSKKSARQHAGLAGLDISTLLPFGQPVIVNDHNPNSKIHPRGIPGYALHPSRNSYGYIIYLPSLKKTVDTTNYVILQGKESRLDQFNYDALTFDEDLNRLTASYHSFIASNEIQESNDLNIESDHDFQSDIELHPEQPRNVLSKAVSPTDSTPPSTHTEDSKRVSKTNIRAPREVDPNISESNILPSKKRSSTPQISNIESTGSGGMHKLNVPLLAPMSQSNTHESSHASKSKDFRHSDSYSENETNHTNVPISSTGGTNNKTVPQISDQETEKRIIHRSPSIDASPPENNSSHNIVPIKTPTTVSEQNTEESIIADLPLPDLPPESPTEFPDPFKELPPINSHQTNSSLGGIGDSNAYTTINSKKRSLEDNETEIKVSRDTWNTKNMRSLEPPRSKKRIHLIAAVKAVKSIKPIRTTLRYDEAITYNKDIKEKEKYIEAYHKEVNQLLKMNTWDTDKYYDRKEIDPKRVINSMFIFNRKRDGTHKARFVARGDIQHPDTYDSGMQSNTVHHYALMTSLSLALDNNYYITQLDISSAYLYADIKEELYIRPPPHLGMNDKLIRLKKSLYGLKQSGANWYETIKSYLIKQCGMEEVRGWSCVFKNSQVTICLFVDDMILFSKDLNANKKIITTLKKQYDTKIINLGEGDNEIQYDILGLEIKYQRSKYMKLGMEKSLTEKLPKLNVPLNPKGKKLRAPGQPGHYIDQDELEIDEDEYKEKVHEMQKLIGLASYVGYKFRFDLLYYINTLAQHILFPSRQVLDMTYELIQFMWDTRDKQLIWHKNKPTKPDNKLVAISDASYGNQPYYKSQIGNIFLLNGKVIGGKSTKASLTCTSTTEAEIHAVSEAIPLLNNLSHLVQELNKKPIIKGSLTDSRSTISIIKSTNEEKFRNRFFGTKAMRLRDEVSGNNLYVYYIETKKNIADVMTKPLPIKTFKLLTNKWIH.

3 stretches are compositionally biased toward polar residues: residues 1-10, 48-60, and 127-152; these read MESQQLSNYP, TKAN…TPAS, and QSQF…GNTF. Disordered stretches follow at residues 1-93, 126-173, and 352-421; these read MESQ…MMTQ, PQSQ…RPPP, and GSRN…SKST. The segment covering 153–165 has biased composition (low complexity); that stretch reads TDSSSADSDMTST. The interval 299-401 is RNA-binding; it reads NNGIHINNKV…NSKSKTARAH (103 aa). Positions 402-418 are enriched in low complexity; the sequence is NVSTSNNSPSTDNDSIS. Phosphoserine is present on Ser416. Asp461 functions as the For protease activity; shared with dimeric partner in the catalytic mechanism. The integrase-type zinc finger-like stretch occupies residues 583–640; it reads NVHTSESTRKYPYPFIHRMLAHANAQTIRYSLKNNTITYFNESDVDWSSAIDYQCPDC. Residues 660 to 835 form the Integrase catalytic domain; it reads NSYEPFQYLH…AGLDISTLLP (176 aa). Mg(2+) contacts are provided by Asp671 and Asp736. Disordered stretches follow at residues 956–1087, 1092–1111, and 1130–1187; these read SKAV…ETEK, RSPS…NIVP, and DLPL…DNET. Residues 960–969 are compositionally biased toward low complexity; that stretch reads SPTDSTPPST. Over residues 1005 to 1015 the composition is skewed to polar residues; the sequence is STPQISNIEST. A compositionally biased stretch (basic and acidic residues) spans 1038 to 1053; the sequence is ESSHASKSKDFRHSDS. Polar residues-rich tracts occupy residues 1054–1082 and 1101–1111; these read YSEN…QISD and PENNSSHNIVP. The Bipartite nuclear localization signal motif lies at 1178 to 1212; it reads KKRSLEDNETEIKVSRDTWNTKNMRSLEPPRSKKR. Positions 1338 to 1476 constitute a Reverse transcriptase Ty1/copia-type domain; it reads NNYYITQLDI…DILGLEIKYQ (139 aa). The Mg(2+) site is built by Asp1346, Asp1427, Asp1428, Asp1610, Glu1652, and Asp1685. The 143-residue stretch at 1610–1752 folds into the RNase H Ty1/copia-type domain; that stretch reads DASYGNQPYY…IKTFKLLTNK (143 aa).

In terms of assembly, the capsid protein forms a homotrimer, from which the VLPs are assembled. The protease is a homodimer, whose active site consists of two apposed aspartic acid residues. Post-translationally, initially, virus-like particles (VLPs) are composed of the structural unprocessed proteins Gag and Gag-Pol, and also contain the host initiator methionine tRNA (tRNA(i)-Met) which serves as a primer for minus-strand DNA synthesis, and a dimer of genomic Ty RNA. Processing of the polyproteins occurs within the particle and proceeds by an ordered pathway, called maturation. First, the protease (PR) is released by autocatalytic cleavage of the Gag-Pol polyprotein yielding capsid protein p45 and a Pol-p154 precursor protein. This cleavage is a prerequisite for subsequent processing of Pol-p154 at the remaining sites to release the mature structural and catalytic proteins. Maturation takes place prior to the RT reaction and is required to produce transposition-competent VLPs.

The protein localises to the cytoplasm. It is found in the nucleus. The enzyme catalyses DNA(n) + a 2'-deoxyribonucleoside 5'-triphosphate = DNA(n+1) + diphosphate. The catalysed reaction is Endonucleolytic cleavage to 5'-phosphomonoester.. Capsid protein (CA) is the structural component of the virus-like particle (VLP), forming the shell that encapsulates the retrotransposons dimeric RNA genome. The particles are assembled from trimer-clustered units and there are holes in the capsid shells that allow for the diffusion of macromolecules. CA also has nucleocapsid-like chaperone activity, promoting primer tRNA(i)-Met annealing to the multipartite primer-binding site (PBS), dimerization of Ty1 RNA and initiation of reverse transcription. Its function is as follows. The aspartyl protease (PR) mediates the proteolytic cleavages of the Gag and Gag-Pol polyproteins after assembly of the VLP. Functionally, reverse transcriptase/ribonuclease H (RT) is a multifunctional enzyme that catalyzes the conversion of the retro-elements RNA genome into dsDNA within the VLP. The enzyme displays a DNA polymerase activity that can copy either DNA or RNA templates, and a ribonuclease H (RNase H) activity that cleaves the RNA strand of RNA-DNA heteroduplexes during plus-strand synthesis and hydrolyzes RNA primers. The conversion leads to a linear dsDNA copy of the retrotransposon that includes long terminal repeats (LTRs) at both ends. In terms of biological role, integrase (IN) targets the VLP to the nucleus, where a subparticle preintegration complex (PIC) containing at least integrase and the newly synthesized dsDNA copy of the retrotransposon must transit the nuclear membrane. Once in the nucleus, integrase performs the integration of the dsDNA into the host genome. This chain is Transposon Ty1-DR1 Gag-Pol polyprotein (TY1B-DR1), found in Saccharomyces cerevisiae (strain ATCC 204508 / S288c) (Baker's yeast).